Reading from the N-terminus, the 372-residue chain is Embryonic growth/differentiation factor 1 (372 aa).

Positions 1–29 are cleaved as a signal peptide; the sequence is MPPPQQGPCGHHLLLLLALLLPSLPLTRA. Residues 30-253 constitute a propeptide that is removed on maturation; that stretch reads PVPPGPAAAL…LCHPLARPRR (224 aa). The segment at 67-86 is disordered; the sequence is RRRDPQETRSGSRRTSPGVT. Asn206 is a glycosylation site (N-linked (GlcNAc...) asparagine). 3 disulfides stabilise this stretch: Cys267/Cys337, Cys296/Cys369, and Cys300/Cys371.

The protein belongs to the TGF-beta family. In terms of assembly, homodimer; disulfide-linked. Expressed in the brain.

It is found in the secreted. Its function is as follows. May mediate cell differentiation events during embryonic development. The polypeptide is Embryonic growth/differentiation factor 1 (GDF1) (Homo sapiens (Human)).